Here is an 89-residue protein sequence, read N- to C-terminus: Small ribosomal subunit protein uS17 (89 aa).

This sequence belongs to the universal ribosomal protein uS17 family. In terms of assembly, part of the 30S ribosomal subunit.

One of the primary rRNA binding proteins, it binds specifically to the 5'-end of 16S ribosomal RNA. This is Small ribosomal subunit protein uS17 from Lactiplantibacillus plantarum (strain ATCC BAA-793 / NCIMB 8826 / WCFS1) (Lactobacillus plantarum).